Here is a 156-residue protein sequence, read N- to C-terminus: Small ribosomal subunit protein uS7 (156 aa).

This sequence belongs to the universal ribosomal protein uS7 family. Part of the 30S ribosomal subunit. Contacts proteins S9 and S11.

One of the primary rRNA binding proteins, it binds directly to 16S rRNA where it nucleates assembly of the head domain of the 30S subunit. Is located at the subunit interface close to the decoding center, probably blocks exit of the E-site tRNA. In Pelobacter propionicus (strain DSM 2379 / NBRC 103807 / OttBd1), this protein is Small ribosomal subunit protein uS7.